Consider the following 138-residue polypeptide: F-box protein At4g12382 (138 aa).

Positions 7–53 (NPSFADLPSSLIEVIMSHLALKNNIRASAACKSWYEVGVSVRVVEKH) constitute an F-box domain.

This Arabidopsis thaliana (Mouse-ear cress) protein is F-box protein At4g12382.